A 1366-amino-acid chain; its full sequence is DNA-directed RNA polymerase subunit beta'' (1366 aa).

Positions 220, 290, 297, and 300 each coordinate Zn(2+).

Belongs to the RNA polymerase beta' chain family. RpoC2 subfamily. As to quaternary structure, in plastids the minimal PEP RNA polymerase catalytic core is composed of four subunits: alpha, beta, beta', and beta''. When a (nuclear-encoded) sigma factor is associated with the core the holoenzyme is formed, which can initiate transcription. Zn(2+) serves as cofactor.

The protein resides in the plastid. It localises to the chloroplast. The catalysed reaction is RNA(n) + a ribonucleoside 5'-triphosphate = RNA(n+1) + diphosphate. DNA-dependent RNA polymerase catalyzes the transcription of DNA into RNA using the four ribonucleoside triphosphates as substrates. This Lemna minor (Common duckweed) protein is DNA-directed RNA polymerase subunit beta''.